The sequence spans 338 residues: Tetraacyldisaccharide 4'-kinase (338 aa).

51-58 lines the ATP pocket; it reads HLGGAGKT.

Belongs to the LpxK family.

It catalyses the reaction a lipid A disaccharide + ATP = a lipid IVA + ADP + H(+). It participates in glycolipid biosynthesis; lipid IV(A) biosynthesis; lipid IV(A) from (3R)-3-hydroxytetradecanoyl-[acyl-carrier-protein] and UDP-N-acetyl-alpha-D-glucosamine: step 6/6. Functionally, transfers the gamma-phosphate of ATP to the 4'-position of a tetraacyldisaccharide 1-phosphate intermediate (termed DS-1-P) to form tetraacyldisaccharide 1,4'-bis-phosphate (lipid IVA). The polypeptide is Tetraacyldisaccharide 4'-kinase (Rhodopseudomonas palustris (strain HaA2)).